The following is a 298-amino-acid chain: Specificity protein transcription factor 1 (298 aa).

A compositionally biased stretch (low complexity) spans 206–218 (VSSGSESVSARGT). A disordered region spans residues 206–233 (VSSGSESVSARGTSGSGGTGKYPSSRTA). Residues 260–284 (HNCHIAGCGKVYNKSSHLKAHLRWH) form a C2H2-type zinc finger.

Belongs to the Sp1 C2H2-type zinc-finger protein family. In terms of tissue distribution, expressed in ASJ sensory neurons, pharyngeal cells, rectal cells, intestine, seam cells, and vulval cells.

Functionally, probable transcription factor which modulates gene expression, thereby acting as an ASJ sensory neuron terminal selector gene. This is Specificity protein transcription factor 1 from Caenorhabditis elegans.